Here is a 188-residue protein sequence, read N- to C-terminus: Probable nicotinate-nucleotide adenylyltransferase (188 aa).

Belongs to the NadD family.

The catalysed reaction is nicotinate beta-D-ribonucleotide + ATP + H(+) = deamido-NAD(+) + diphosphate. It functions in the pathway cofactor biosynthesis; NAD(+) biosynthesis; deamido-NAD(+) from nicotinate D-ribonucleotide: step 1/1. Its function is as follows. Catalyzes the reversible adenylation of nicotinate mononucleotide (NaMN) to nicotinic acid adenine dinucleotide (NaAD). In Salinispora tropica (strain ATCC BAA-916 / DSM 44818 / JCM 13857 / NBRC 105044 / CNB-440), this protein is Probable nicotinate-nucleotide adenylyltransferase.